The chain runs to 343 residues: Leucine-rich repeat-containing protein 39 (343 aa).

10 LRR repeats span residues 64–87, 88–110, 111–133, 134–156, 158–180, 181–203, 204–226, 228–249, 250–274, and 275–295; these read EEGR…LVQL, SQIQ…ISSF, QSLI…IGKL, TRLR…LGCC, NLEK…LSNL, KKLS…VVNL, PSLE…IHRM, KLHT…ISRM, KSLD…GMSN, and LRFV…PDLN.

It is found in the cytoplasm. It localises to the myofibril. Its subcellular location is the sarcomere. The protein resides in the m line. In terms of biological role, component of the sarcomeric M-band which plays a role in myocyte response to biomechanical stress. May regulate expression of other M-band proteins via an SRF-dependent pathway. Important for normal contractile function in heart. The sequence is that of Leucine-rich repeat-containing protein 39 from Danio rerio (Zebrafish).